Here is a 901-residue protein sequence, read N- to C-terminus: Aconitate hydratase A (901 aa).

[4Fe-4S] cluster-binding residues include C443, C509, and C512.

This sequence belongs to the aconitase/IPM isomerase family. As to quaternary structure, monomer. [4Fe-4S] cluster is required as a cofactor.

The enzyme catalyses citrate = D-threo-isocitrate. The catalysed reaction is (2S,3R)-3-hydroxybutane-1,2,3-tricarboxylate = 2-methyl-cis-aconitate + H2O. Its pathway is carbohydrate metabolism; tricarboxylic acid cycle; isocitrate from oxaloacetate: step 2/2. The protein operates within organic acid metabolism; propanoate degradation. In terms of biological role, involved in the catabolism of short chain fatty acids (SCFA) via the tricarboxylic acid (TCA)(acetyl degradation route) and probably the 2-methylcitrate cycle I (propionate degradation route). Catalyzes the reversible isomerization of citrate to isocitrate via cis-aconitate. Could catalyze the hydration of 2-methyl-cis-aconitate to yield (2R,3S)-2-methylisocitrate. The apo form of AcnA functions as a RNA-binding regulatory protein. This chain is Aconitate hydratase A (acnA), found in Staphylococcus epidermidis (strain ATCC 35984 / DSM 28319 / BCRC 17069 / CCUG 31568 / BM 3577 / RP62A).